Reading from the N-terminus, the 150-residue chain is MQIILLEKVVNLGNLGDVVRVKDGYARNFLIPNKQARRATASAIQEFEARRAELEKLAAERLAAAQAEGEKLNGLTLQLSQKAGVDGRLFGSVTNHDIAAALTAQGFKVEKAQVRMPNGPLKTVGDHPVAVSLHTDVSVDVTVSVLGETV.

It belongs to the bacterial ribosomal protein bL9 family.

Binds to the 23S rRNA. The chain is Large ribosomal subunit protein bL9 from Ralstonia nicotianae (strain ATCC BAA-1114 / GMI1000) (Ralstonia solanacearum).